The following is a 649-amino-acid chain: UvrABC system protein C (649 aa).

Residues serine 12–isoleucine 91 enclose the GIY-YIG domain. The UVR domain occupies asparagine 201–threonine 236. The disordered stretch occupies residues arginine 603–glycine 649.

This sequence belongs to the UvrC family. In terms of assembly, interacts with UvrB in an incision complex.

It is found in the cytoplasm. The UvrABC repair system catalyzes the recognition and processing of DNA lesions. UvrC both incises the 5' and 3' sides of the lesion. The N-terminal half is responsible for the 3' incision and the C-terminal half is responsible for the 5' incision. This chain is UvrABC system protein C, found in Geobacter sp. (strain M21).